Reading from the N-terminus, the 119-residue chain is Beta-2-microglobulin (119 aa).

Residues 1–20 form the signal peptide; sequence MARSVVVSLFVLLALAGLEA. Residues 25–114 form the Ig-like C1-type domain; the sequence is PKIQVYSRHP…VTFQTPKTVK (90 aa).

It belongs to the beta-2-microglobulin family. In terms of assembly, heterodimer of an alpha chain and a beta chain. Beta-2-microglobulin is the beta-chain of major histocompatibility complex class I molecules.

It localises to the secreted. Component of the class I major histocompatibility complex (MHC). Involved in the presentation of peptide antigens to the immune system. This chain is Beta-2-microglobulin (B2M), found in Brachyteles arachnoides (Southern muriqui).